A 58-amino-acid chain; its full sequence is Metallothionein-1 (58 aa).

The tract at residues 1–28 (PGPCCKDKCECAEGGCKTGCKCTSCRCA) is beta. 18 residues coordinate a divalent metal cation: Cys4, Cys5, Cys9, Cys11, Cys16, Cys20, Cys22, Cys25, Cys27, Cys30, Cys33, Cys37, Cys39, Cys45, Cys49, Cys53, Cys55, and Cys56. The alpha stretch occupies residues 29–58 (PCEKCTSGCKCPSKDECAKTCSKPCSCCXX).

Belongs to the metallothionein superfamily. Type 3 family.

Its function is as follows. Metallothioneins have a high content of cysteine residues that bind various heavy metals. The different forms of lobster metallothioneins may have different biological functions. Class I MTS in marine crustacea are involved in the sequestration of elevated levels of heavy-metal ions. Binds 6 metal ions. Known to bind cadmium. This Homarus americanus (American lobster) protein is Metallothionein-1.